Reading from the N-terminus, the 128-residue chain is MFQAAGAAQATPSHEAKGSSGSSTVQRSKSFSLRAQVKETCAACQKTVYPMERLVADKLIFHNSCFCCKHCHTKLSLGSYAAMHGEFYCRPHFQQLFKSKGNYDEGFGRKQHKELWAHKEVDSGTKTA.

Met-1 is modified (N-acetylmethionine). The tract at residues 1 to 25 is disordered; the sequence is MFQAAGAAQATPSHEAKGSSGSSTV. In terms of domain architecture, LIM zinc-binding spans 39–99; the sequence is ETCAACQKTV…RPHFQQLFKS (61 aa). Residues Cys-41, Cys-44, His-62, Cys-65, Cys-68, Cys-71, Cys-89, and His-92 each contribute to the Zn(2+) site.

As to quaternary structure, interacts with ILK.

Its subcellular location is the cytoplasm. The protein localises to the nucleus. In terms of biological role, acts as an activator of the protein-kinase ILK, thereby regulating cell motility. The sequence is that of LIM domain-containing protein 2 from Mus musculus (Mouse).